The primary structure comprises 669 residues: DNA ligase (669 aa).

35–39 (DFEYD) contributes to the NAD(+) binding site. A disordered region spans residues 52-71 (YPEWDSPDSPTHRVGSDKTE). Positions 61 to 71 (PTHRVGSDKTE) are enriched in basic and acidic residues. NAD(+) is bound by residues 84–85 (SL) and glutamate 115. Residue lysine 117 is the N6-AMP-lysine intermediate of the active site. NAD(+)-binding residues include arginine 138, glutamate 175, lysine 290, and lysine 314. Zn(2+) contacts are provided by cysteine 408, cysteine 411, cysteine 426, and cysteine 432. The BRCT domain occupies 590 to 669 (PVSARLAGKT…EEEFLRLIEE (80 aa)).

This sequence belongs to the NAD-dependent DNA ligase family. LigA subfamily. Mg(2+) serves as cofactor. It depends on Mn(2+) as a cofactor.

The catalysed reaction is NAD(+) + (deoxyribonucleotide)n-3'-hydroxyl + 5'-phospho-(deoxyribonucleotide)m = (deoxyribonucleotide)n+m + AMP + beta-nicotinamide D-nucleotide.. In terms of biological role, DNA ligase that catalyzes the formation of phosphodiester linkages between 5'-phosphoryl and 3'-hydroxyl groups in double-stranded DNA using NAD as a coenzyme and as the energy source for the reaction. It is essential for DNA replication and repair of damaged DNA. This Porphyromonas gingivalis (strain ATCC 33277 / DSM 20709 / CIP 103683 / JCM 12257 / NCTC 11834 / 2561) protein is DNA ligase.